The chain runs to 225 residues: Small ribosomal subunit protein uS3 (225 aa).

A KH type-2 domain is found at isoleucine 39–asparagine 109.

This sequence belongs to the universal ribosomal protein uS3 family. In terms of assembly, part of the 30S ribosomal subunit. Forms a tight complex with proteins S10 and S14.

Binds the lower part of the 30S subunit head. Binds mRNA in the 70S ribosome, positioning it for translation. This Mycoplasma mobile (strain ATCC 43663 / 163K / NCTC 11711) (Mesomycoplasma mobile) protein is Small ribosomal subunit protein uS3.